The chain runs to 255 residues: Thiazole synthase (255 aa).

The active-site Schiff-base intermediate with DXP is the K96. 1-deoxy-D-xylulose 5-phosphate-binding positions include G157, 183-184, and 205-206; these read AG and NS.

The protein belongs to the ThiG family. Homotetramer. Forms heterodimers with either ThiH or ThiS.

It localises to the cytoplasm. The catalysed reaction is [ThiS sulfur-carrier protein]-C-terminal-Gly-aminoethanethioate + 2-iminoacetate + 1-deoxy-D-xylulose 5-phosphate = [ThiS sulfur-carrier protein]-C-terminal Gly-Gly + 2-[(2R,5Z)-2-carboxy-4-methylthiazol-5(2H)-ylidene]ethyl phosphate + 2 H2O + H(+). The protein operates within cofactor biosynthesis; thiamine diphosphate biosynthesis. In terms of biological role, catalyzes the rearrangement of 1-deoxy-D-xylulose 5-phosphate (DXP) to produce the thiazole phosphate moiety of thiamine. Sulfur is provided by the thiocarboxylate moiety of the carrier protein ThiS. In vitro, sulfur can be provided by H(2)S. The sequence is that of Thiazole synthase from Staphylococcus carnosus (strain TM300).